Here is an 89-residue protein sequence, read N- to C-terminus: Large ribosomal subunit protein bL31B (89 aa).

This sequence belongs to the bacterial ribosomal protein bL31 family. Type B subfamily. As to quaternary structure, part of the 50S ribosomal subunit.

The protein is Large ribosomal subunit protein bL31B of Haemophilus ducreyi (strain 35000HP / ATCC 700724).